The primary structure comprises 336 residues: Calcium-gated potassium channel MthK (336 aa).

At 1 to 20 the chain is on the cytoplasmic side; sequence MVLVIEIIRKHLPRVLKVPA. Residues 21-41 traverse the membrane as a helical segment; sequence TRILLLVLAVIIYGTAGFHFI. At 42 to 48 the chain is on the extracellular side; the sequence is EGESWTV. The segment at residues 49–58 is an intramembrane region (helical; Pore-forming); the sequence is SLYWTFVTIA. Positions 59-64 form an intramembrane region, pore-forming; the sequence is TVGYGD. A Selectivity filter motif is present at residues 59 to 64; it reads TVGYGD. Topologically, residues 65-69 are extracellular; it reads YSPST. Residues 70–95 form a helical membrane-spanning segment; that stretch reads PLGMYFTVTLIVLGIGTFAVAVERLL. The Cytoplasmic portion of the chain corresponds to 96–106; that stretch reads EFLINREQMKL. The region spanning 115–230 is the RCK N-terminal domain; that stretch reads SRHVVICGWS…RMAGADQVIS (116 aa). Residues aspartate 184, glutamate 210, and glutamate 212 each contribute to the Ca(2+) site. The RCK C-terminal domain occupies 252 to 336; that stretch reads VQDVLAEEST…IERLKNYISA (85 aa).

Homotetramer.

The protein resides in the cell membrane. Calcium-gated potassium channel. This chain is Calcium-gated potassium channel MthK (mthK), found in Methanothermobacter thermautotrophicus (strain ATCC 29096 / DSM 1053 / JCM 10044 / NBRC 100330 / Delta H) (Methanobacterium thermoautotrophicum).